A 776-amino-acid polypeptide reads, in one-letter code: Zinc finger CCCH-type antiviral protein 1 (776 aa).

N-acetylalanine is present on Ala-2. An N-terminal domain region spans residues 2 to 254 (ADPGVCCFIT…DRSKSRDRFL (253 aa)). A Nuclear localization signal motif is present at residues 69 to 76 (RARVCRRK). 4 C3H1-type zinc fingers span residues 73–86 (CRRKYCQRPCDSLH), 88–110 (CKLNLLGRCHYAQSQRNLCKYSH), 150–172 (CKSYKGEGRKQTCGQPQPCERLH), and 169–193 (ERLHICEHFTRGNCSYLNCLRSHNL). Residues 221-249 (NKHARRNPPGTRAAHPHRRGGAHRDRSKS) form a disordered region. Positions 224–254 (ARRNPPGTRAAHPHRRGGAHRDRSKSRDRFL) are binding to EXOSC5. Residues Ser-257, Ser-262, Ser-266, and Ser-270 each carry the phosphoserine; by GSK3-beta modification. The residue at position 274 (Ser-274) is a Phosphoserine. At Thr-278 the chain carries Phosphothreonine. Residue Ser-283 is modified to Phosphoserine. The Nuclear export signal signature appears at 284 to 291 (LEDVSVDV). The tract at residues 308–355 (PVSSKAAGVQGPSQMRASQEFSEDGNLDDIFSRNRSDSSSSRASAAKV) is disordered. Residues 318–327 (GPSQMRASQE) show a composition bias toward polar residues. 3 positions are modified to phosphoserine: Ser-325, Ser-351, and Ser-398. Low complexity predominate over residues 344–353 (DSSSSRASAA). Residues 405 to 406 (KK) carry the Nuclear localization signal motif. Positions 457–483 (WASASTHNAPNGSSQIMDETPNVSKSS) are disordered. Over residues 459–483 (SASTHNAPNGSSQIMDETPNVSKSS) the composition is skewed to polar residues. Tyr-501 is subject to Phosphotyrosine. The segment at 512-562 (LAVPGEATTPVQSNRLPQSPLSSSSHRAAASGSPGKNSTHTSVSPAIESSR) is disordered. Residues 523–546 (QSNRLPQSPLSSSSHRAAASGSPG) show a composition bias toward low complexity. Residues Ser-544 and Ser-667 each carry the phosphoserine modification. The WWE domain maps to 671–758 (YEEKPLSAVF…ASKTQRHVVR (88 aa)).

It belongs to the ARTD/PARP family. As to quaternary structure, homodimer or homooligomer. Homooligomerization is essential for its antiviral activity. Interacts with EXOSC5. Interacts with EXOSC3, EXOSC7, DCP2 and DCP1A. Interacts with PARN in an RNA-independent manner. Interacts with XRN1 in an RNA-dependent manner. Interacts (via N-terminal domain) with DHX30 (via N-terminus) in an RNA-independent manner. Interacts (via N-terminal domain) with DDX17 in an RNA-independent manner. In terms of processing, phosphorylation at Ser-274 is essential for sequential phosphorylation of Ser-270, Ser-266, Ser-262 and Ser-257 by GSK3-beta. Phosphorylation by GSK3-beta enhances its antiviral activity. As to expression, expressed in the kidney and liver.

It is found in the cytoplasm. Its subcellular location is the nucleus. In terms of biological role, antiviral protein which inhibits the replication of viruses by recruiting the cellular RNA degradation machineries to degrade the viral mRNAs. Binds to a ZAP-responsive element (ZRE) present in the target viral mRNA, recruits cellular poly(A)-specific ribonuclease PARN to remove the poly(A) tail, and the 3'-5' exoribonuclease complex exosome to degrade the RNA body from the 3'-end. It also recruits the decapping complex DCP1-DCP2 through RNA helicase p72 (DDX17) to remove the cap structure of the viral mRNA to initiate its degradation from the 5'-end. Its target viruses belong to families which include retroviridae: human immunodeficiency virus type 1 (HIV-1) and moloney and murine leukemia virus (MoMLV), filoviridae: ebola virus (EBOV) and marburg virus (MARV), togaviridae: sindbis virus (SINV) and Ross river virus (RRV). Specifically targets the multiply spliced but not unspliced or singly spliced HIV-1 mRNAs for degradation. This Rattus norvegicus (Rat) protein is Zinc finger CCCH-type antiviral protein 1 (Zc3hav1).